We begin with the raw amino-acid sequence, 409 residues long: Tryptophan synthase beta chain (409 aa).

At lysine 100 the chain carries N6-(pyridoxal phosphate)lysine.

This sequence belongs to the TrpB family. As to quaternary structure, tetramer of two alpha and two beta chains. Pyridoxal 5'-phosphate is required as a cofactor.

The enzyme catalyses (1S,2R)-1-C-(indol-3-yl)glycerol 3-phosphate + L-serine = D-glyceraldehyde 3-phosphate + L-tryptophan + H2O. It participates in amino-acid biosynthesis; L-tryptophan biosynthesis; L-tryptophan from chorismate: step 5/5. In terms of biological role, the beta subunit is responsible for the synthesis of L-tryptophan from indole and L-serine. The chain is Tryptophan synthase beta chain from Pyrobaculum arsenaticum (strain DSM 13514 / JCM 11321 / PZ6).